We begin with the raw amino-acid sequence, 186 residues long: Elongation factor P (186 aa).

Belongs to the elongation factor P family.

It localises to the cytoplasm. Its pathway is protein biosynthesis; polypeptide chain elongation. In terms of biological role, involved in peptide bond synthesis. Stimulates efficient translation and peptide-bond synthesis on native or reconstituted 70S ribosomes in vitro. Probably functions indirectly by altering the affinity of the ribosome for aminoacyl-tRNA, thus increasing their reactivity as acceptors for peptidyl transferase. The protein is Elongation factor P of Neisseria meningitidis serogroup A / serotype 4A (strain DSM 15465 / Z2491).